The following is a 188-amino-acid chain: ATP synthase subunit b (188 aa).

The chain crosses the membrane as a helical span at residues 24–44; the sequence is LPASYDIVWSLVVFIIVLILF.

This sequence belongs to the ATPase B chain family. As to quaternary structure, F-type ATPases have 2 components, F(1) - the catalytic core - and F(0) - the membrane proton channel. F(1) has five subunits: alpha(3), beta(3), gamma(1), delta(1), epsilon(1). F(0) has three main subunits: a(1), b(2) and c(10-14). The alpha and beta chains form an alternating ring which encloses part of the gamma chain. F(1) is attached to F(0) by a central stalk formed by the gamma and epsilon chains, while a peripheral stalk is formed by the delta and b chains.

It is found in the cell membrane. Its function is as follows. F(1)F(0) ATP synthase produces ATP from ADP in the presence of a proton or sodium gradient. F-type ATPases consist of two structural domains, F(1) containing the extramembraneous catalytic core and F(0) containing the membrane proton channel, linked together by a central stalk and a peripheral stalk. During catalysis, ATP synthesis in the catalytic domain of F(1) is coupled via a rotary mechanism of the central stalk subunits to proton translocation. Functionally, component of the F(0) channel, it forms part of the peripheral stalk, linking F(1) to F(0). The chain is ATP synthase subunit b from Corynebacterium diphtheriae (strain ATCC 700971 / NCTC 13129 / Biotype gravis).